We begin with the raw amino-acid sequence, 426 residues long: Peptidoglycan DD-endopeptidase ShyB (426 aa).

An N-terminal signal peptide occupies residues 1–21 (MGQFRFLALIVAVLCFSVALF). The span at 32 to 48 (SYSVPLNQSVNTSQPPS) shows a compositional bias: polar residues. Positions 32-55 (SYSVPLNQSVNTSQPPSSEMVPSD) are disordered. Positions 291, 295, and 372 each coordinate Zn(2+).

It belongs to the peptidase M23B family. Monomer. Zn(2+) is required as a cofactor.

It localises to the periplasm. It participates in cell wall degradation; peptidoglycan degradation. Its activity is regulated as follows. Not inhibited by metal chelator EDTA. In terms of biological role, cell wall peptidoglycan (PG) DD-endopeptidase, which may act as a substitute for other zinc-dependent PG endopeptidases (ShyA and ShyC) during zinc starvation. Hydrolyzes peptide cross-links which covalently connect adjacent PG strands probably to allow insertion of new glycans and thus cell wall expansion. Degrades purified whole PG sacculi in vitro. It is unclear how it is able to function in low zinc environments, but that may possibly be due to binding zinc with very high affinity, utilizing an alternative metal cofactor or that it may function independently of a bound metal cofactor. The chain is Peptidoglycan DD-endopeptidase ShyB from Vibrio cholerae serotype O1 (strain ATCC 39315 / El Tor Inaba N16961).